The following is a 218-amino-acid chain: MGSAALEILGLVLCLVGWGGLILACGLPMWQVTAFLDHNIVTAQTTWKGLWMSCVVQSTGHMQCKVYDSVLALSTEVQAARALTVSAVLLAFVALFVTLAGAQCTTCVAPGPAKARVALTGGVLYLFCGLLALVPLCWFANIVVREFYDPSVPVSQKYELGAALYIGWAATALLMVGGCLLCCGAWVCTGRPDLSFPVKYSAPRRPTATGDYDKKNYV.

Residues methionine 1–glutamate 7 lie on the Cytoplasmic side of the membrane. The chain crosses the membrane as a helical span at residues isoleucine 8–proline 28. Residues methionine 29–arginine 81 lie on the Extracellular side of the membrane. A helical membrane pass occupies residues alanine 82–alanine 102. At glutamine 103–glycine 122 the chain is on the cytoplasmic side. Residues valine 123–valine 143 form a helical membrane-spanning segment. Residues valine 144–glutamate 159 are Extracellular-facing. The chain crosses the membrane as a helical span at residues leucine 160–leucine 180. Topologically, residues leucine 181–valine 218 are cytoplasmic. Residues tyrosine 217–valine 218 form an interactions with TJP1, TJP2 and TJP3 region.

This sequence belongs to the claudin family. In terms of assembly, directly interacts with TJP1/ZO-1, TJP2/ZO-2 and TJP3/ZO-3. Interacts with MPDZ.

The protein resides in the cell junction. It is found in the tight junction. The protein localises to the cell membrane. Functionally, plays a major role in tight junction-specific obliteration of the intercellular space. This Homo sapiens (Human) protein is Claudin-5 (CLDN5).